A 292-amino-acid polypeptide reads, in one-letter code: Elongation factor Ts (292 aa).

Positions 81-84 (TDFV) are involved in Mg(2+) ion dislocation from EF-Tu.

The protein belongs to the EF-Ts family.

It is found in the cytoplasm. Functionally, associates with the EF-Tu.GDP complex and induces the exchange of GDP to GTP. It remains bound to the aminoacyl-tRNA.EF-Tu.GTP complex up to the GTP hydrolysis stage on the ribosome. The protein is Elongation factor Ts of Psychromonas ingrahamii (strain DSM 17664 / CCUG 51855 / 37).